The following is a 787-amino-acid chain: Pleckstrin homology domain-containing family G member 6 (787 aa).

One can recognise a DH domain in the interval 161–353 (HQQEALWELL…ESFLRHINGQ (193 aa)). The PH domain occupies 409–509 (QLLLEGPVRV…WLEKTQHAQT (101 aa)). The disordered stretch occupies residues 533–762 (QGTESPSTRP…EPGNGKPRRL (230 aa)). Residues 535-557 (TESPSTRPSTPSPSPEDSQSSAE) show a composition bias toward low complexity. Residues 724-742 (LRPRSLREDMLREIREELA) show a composition bias toward basic and acidic residues.

In terms of assembly, interacts with MYH10. Interacts with ELMO1 and EZR (in an open conformation). Interacts with CSPP1.

The protein resides in the cell projection. The protein localises to the microvillus. Its subcellular location is the cytoplasm. It localises to the cytoskeleton. It is found in the spindle. The protein resides in the cleavage furrow. In terms of biological role, guanine nucleotide exchange factor activating the small GTPase RHOA, which, in turn, induces myosin filament formation. Also activates RHOG. Does not activate RAC1, or to a much lower extent than RHOA and RHOG. Part of a functional unit, involving PLEKHG6, MYH10 and RHOA, at the cleavage furrow to advance furrow ingression during cytokinesis. In epithelial cells, required for the formation of microvilli and membrane ruffles on the apical pole. Along with EZR, required for normal macropinocytosis. In Mus musculus (Mouse), this protein is Pleckstrin homology domain-containing family G member 6 (Plekhg6).